A 386-amino-acid polypeptide reads, in one-letter code: Synaptotagmin-5 (386 aa).

Pro residues predominate over residues 1-16; sequence MFPEPPTPGPPSPDTP. Residues 1–23 are disordered; sequence MFPEPPTPGPPSPDTPPDSSRIS. The Vesicular portion of the chain corresponds to 1–24; sequence MFPEPPTPGPPSPDTPPDSSRISH. The helical transmembrane segment at 25–45 threads the bilayer; that stretch reads GPVPPWALATIVLVSGLLIFS. Residues 46 to 386 are Cytoplasmic-facing; that stretch reads CCFCLYRKSC…PDRVRLLPAP (341 aa). C2 domains lie at 108 to 227 and 239 to 372; these read ELGR…QAWR and KLGD…AQWH. The Ca(2+) site is built by Leu138, Asp139, Asp145, Asp197, Phe198, Asp199, Ser202, Asp205, Asp270, Asp276, Asp330, and Asp332.

It belongs to the synaptotagmin family. As to quaternary structure, homodimer. Interacts with both alpha- and beta-tubulin. Requires Ca(2+) as cofactor.

Its subcellular location is the cytoplasmic vesicle. It localises to the secretory vesicle. It is found in the synaptic vesicle membrane. The protein resides in the recycling endosome membrane. Functionally, may be involved in Ca(2+)-dependent exocytosis of secretory vesicles through Ca(2+) and phospholipid binding to the C2 domain or may serve as Ca(2+) sensors in the process of vesicular trafficking and exocytosis. Regulates the Ca(2+)-dependent secretion of norepinephrine in PC12 cells. Required for export from the endocytic recycling compartment to the cell surface. The protein is Synaptotagmin-5 (SYT5) of Homo sapiens (Human).